A 238-amino-acid chain; its full sequence is 2-C-methyl-D-erythritol 4-phosphate cytidylyltransferase (238 aa).

The protein belongs to the IspD/TarI cytidylyltransferase family. IspD subfamily.

The enzyme catalyses 2-C-methyl-D-erythritol 4-phosphate + CTP + H(+) = 4-CDP-2-C-methyl-D-erythritol + diphosphate. It participates in isoprenoid biosynthesis; isopentenyl diphosphate biosynthesis via DXP pathway; isopentenyl diphosphate from 1-deoxy-D-xylulose 5-phosphate: step 2/6. Functionally, catalyzes the formation of 4-diphosphocytidyl-2-C-methyl-D-erythritol from CTP and 2-C-methyl-D-erythritol 4-phosphate (MEP). In Acinetobacter baumannii (strain AYE), this protein is 2-C-methyl-D-erythritol 4-phosphate cytidylyltransferase.